A 322-amino-acid polypeptide reads, in one-letter code: tRNA U34 carboxymethyltransferase (322 aa).

Residues lysine 90, tryptophan 104, lysine 109, glycine 129, 151–153 (DPS), 180–181 (IE), methionine 196, tyrosine 200, and arginine 315 contribute to the carboxy-S-adenosyl-L-methionine site.

This sequence belongs to the class I-like SAM-binding methyltransferase superfamily. CmoB family. As to quaternary structure, homotetramer.

It carries out the reaction carboxy-S-adenosyl-L-methionine + 5-hydroxyuridine(34) in tRNA = 5-carboxymethoxyuridine(34) in tRNA + S-adenosyl-L-homocysteine + H(+). Catalyzes carboxymethyl transfer from carboxy-S-adenosyl-L-methionine (Cx-SAM) to 5-hydroxyuridine (ho5U) to form 5-carboxymethoxyuridine (cmo5U) at position 34 in tRNAs. The chain is tRNA U34 carboxymethyltransferase from Cellvibrio japonicus (strain Ueda107) (Pseudomonas fluorescens subsp. cellulosa).